The sequence spans 779 residues: MENNKRGVVEAKGIKSHYFQTLANYVSNNLELLHNNPKQANSFAASVFGSTAPIDEKDLLDLLVPSDANADALAAGMDCCLLLGEKYRPHFDAAVQQLARLGRTHDVATVIDDEKKFTALSKKTKLKKTDEAKILQAFFKIHSTEDEEKFEAISELCQLDLDFDAYVFIKALTLENEENQELVETIKDNLVEAWNKSNPLLVKLLLEGVKEQDPVDKFTYLLLQPLTEATLSDAVNFIVEKYSAELPDEGDASLVVRSQLGCQFFFLVTRTLAHDQRELAKLVQTLIPRPVRLEVFPGLQRSVFKSSVFLGHHIIQIFMGCEFCSIQSIKNTMFSAKKPFQDWSFVGLAQDFECPWRRLAIAELLKKFSVSVVEKVFDNPVALIPQHESDNEALIELVTNALRFALWIVEFYETETNEKSIKELAFLDHSSKTLLIESFTKFLQGKDVKDQDHLKRIIDALEKSRTQETKSNLEYSREEIKTKMPSSSSAKAQVLHGLNTSAAAGLIVPSLSLLEIPVDEVDSTSHLTTSKDIGQGVFVKAQDTVTEKQKEAPLVAQQTAFHHEPQTATLVPPSPNEESMAAESISTDGWDSPTKSVVLPLDDMILEEEERDALKPDSVNSHRSEETTPVPEQLPQETSERVTSPPPGERSRTAWGDGDATPMILATPTNDYKVSGFGGAKLAKGFGTMGSTGGGFGGGGGGGSYGGRGGYGGGDRGGRGGGFGGGDRGGRGGYGGGDRGGRGGGYGGGDRGGYGQRGGYVAGGDRGGRGGYRGGGGNF.

The segment at 203 to 464 (KLLLEGVKEQ…KRIIDALEKS (262 aa)) is involved in dimerization. The active-site Proton acceptor is the H453. Disordered regions lie at residues 563–596 (HEPQTATLVPPSPNEESMAAESISTDGWDSPTKS), 611–661 (RDAL…GDAT), and 718–779 (GRGG…GGNF). Positions 584–595 (SISTDGWDSPTK) are enriched in polar residues. Residues 612 to 626 (DALKPDSVNSHRSEE) show a composition bias toward basic and acidic residues. The segment at 699–772 (GGGGGSYGGR…GGDRGGRGGY (74 aa)) is RNA-binding RGG-box.

In terms of assembly, homodimer. Interacts with pgl-2 and pgl-3; this association is not required for P-granule localization of either pgl-2 or pgl-3. Interacts with ife-1. Interacts with prmt-1; the interaction is direct. Interacts with nmad-1. Interacts with P granule components meg-1, meg-3 and meg-4. Requires Does not require metal ions for catalytic activity. as cofactor.

The protein resides in the cytoplasmic granule. The enzyme catalyses [RNA] containing guanosine + H2O = an [RNA fragment]-3'-guanosine-3'-phosphate + a 5'-hydroxy-ribonucleotide-3'-[RNA fragment].. Guanyl-specific endoribonuclease which cleaves the phosphodiester bond in single-stranded RNA between the 3'-guanylic residue and the 5'-OH residue of adjacent nucleotide, resulting in the formation of a corresponding 2',3'-cyclic phosphate intermediate. Essential role in male and female postembryonic germline development; maternally provided protein maintains a population of proliferating germ cells and zygotic expression is required for correct oogenesis. Together with the P-granule component pgl-3, is involved in the formation of P-granules. Together with pgl-3, probably recruits other granule components such as pos-1, mex-3 and glh-1 to P-granules. In addition, may act redundantly with pgl-3 to protect germ cells from excessive germline apoptosis during normal oogenesis and development of the two gonadal arms. This may in part be through regulating the localization of sir-2.1 which is involved in germ cell apoptosis. May protect somatic cells from excessive apoptosis during normal development. The protein is Guanyl-specific ribonuclease pgl-1 of Caenorhabditis remanei (Caenorhabditis vulgaris).